Here is a 91-residue protein sequence, read N- to C-terminus: ATP synthase subunit c (91 aa).

The next 2 helical transmembrane spans lie at 4-24 (FTMC…GTGI) and 53-73 (IGLA…LIIL).

The protein belongs to the ATPase C chain family. F-type ATPases have 2 components, F(1) - the catalytic core - and F(0) - the membrane proton channel. F(1) has five subunits: alpha(3), beta(3), gamma(1), delta(1), epsilon(1). F(0) has three main subunits: a(1), b(2) and c(10-14). The alpha and beta chains form an alternating ring which encloses part of the gamma chain. F(1) is attached to F(0) by a central stalk formed by the gamma and epsilon chains, while a peripheral stalk is formed by the delta and b chains.

Its subcellular location is the cell inner membrane. In terms of biological role, f(1)F(0) ATP synthase produces ATP from ADP in the presence of a proton or sodium gradient. F-type ATPases consist of two structural domains, F(1) containing the extramembraneous catalytic core and F(0) containing the membrane proton channel, linked together by a central stalk and a peripheral stalk. During catalysis, ATP synthesis in the catalytic domain of F(1) is coupled via a rotary mechanism of the central stalk subunits to proton translocation. Functionally, key component of the F(0) channel; it plays a direct role in translocation across the membrane. A homomeric c-ring of between 10-14 subunits forms the central stalk rotor element with the F(1) delta and epsilon subunits. In Geotalea uraniireducens (strain Rf4) (Geobacter uraniireducens), this protein is ATP synthase subunit c.